Reading from the N-terminus, the 384-residue chain is Dual-specificity RNA methyltransferase RlmN (384 aa).

Catalysis depends on Glu-93, which acts as the Proton acceptor. A Radical SAM core domain is found at 99–339 (EETRGTLCVS…TTIRKTRGDD (241 aa)). The cysteines at positions 106 and 344 are disulfide-linked. 3 residues coordinate [4Fe-4S] cluster: Cys-113, Cys-117, and Cys-120. Residues 170 to 171 (GE), Ser-202, 224 to 226 (SLH), and Asn-301 each bind S-adenosyl-L-methionine. Residue Cys-344 is the S-methylcysteine intermediate of the active site.

Belongs to the radical SAM superfamily. RlmN family. The cofactor is [4Fe-4S] cluster.

The protein localises to the cytoplasm. The catalysed reaction is adenosine(2503) in 23S rRNA + 2 reduced [2Fe-2S]-[ferredoxin] + 2 S-adenosyl-L-methionine = 2-methyladenosine(2503) in 23S rRNA + 5'-deoxyadenosine + L-methionine + 2 oxidized [2Fe-2S]-[ferredoxin] + S-adenosyl-L-homocysteine. The enzyme catalyses adenosine(37) in tRNA + 2 reduced [2Fe-2S]-[ferredoxin] + 2 S-adenosyl-L-methionine = 2-methyladenosine(37) in tRNA + 5'-deoxyadenosine + L-methionine + 2 oxidized [2Fe-2S]-[ferredoxin] + S-adenosyl-L-homocysteine. Functionally, specifically methylates position 2 of adenine 2503 in 23S rRNA and position 2 of adenine 37 in tRNAs. m2A2503 modification seems to play a crucial role in the proofreading step occurring at the peptidyl transferase center and thus would serve to optimize ribosomal fidelity. The protein is Dual-specificity RNA methyltransferase RlmN of Cupriavidus pinatubonensis (strain JMP 134 / LMG 1197) (Cupriavidus necator (strain JMP 134)).